We begin with the raw amino-acid sequence, 200 residues long: ATP-dependent Clp protease proteolytic subunit (200 aa).

Ser103 functions as the Nucleophile in the catalytic mechanism. Residue His128 is part of the active site.

Belongs to the peptidase S14 family. In terms of assembly, fourteen ClpP subunits assemble into 2 heptameric rings which stack back to back to give a disk-like structure with a central cavity, resembling the structure of eukaryotic proteasomes.

It is found in the cytoplasm. It carries out the reaction Hydrolysis of proteins to small peptides in the presence of ATP and magnesium. alpha-casein is the usual test substrate. In the absence of ATP, only oligopeptides shorter than five residues are hydrolyzed (such as succinyl-Leu-Tyr-|-NHMec, and Leu-Tyr-Leu-|-Tyr-Trp, in which cleavage of the -Tyr-|-Leu- and -Tyr-|-Trp bonds also occurs).. Its function is as follows. Cleaves peptides in various proteins in a process that requires ATP hydrolysis. Has a chymotrypsin-like activity. Plays a major role in the degradation of misfolded proteins. The sequence is that of ATP-dependent Clp protease proteolytic subunit from Vibrio parahaemolyticus serotype O3:K6 (strain RIMD 2210633).